Consider the following 210-residue polypeptide: CASP-like protein 3A1 (210 aa).

At Met-1 to Asp-44 the chain is on the cytoplasmic side. A helical transmembrane segment spans residues Val-45–Met-65. Residues Ala-66 to Glu-94 lie on the Extracellular side of the membrane. The helical transmembrane segment at Tyr-95 to Val-115 threads the bilayer. The Cytoplasmic segment spans residues Ser-116 to His-130. The helical transmembrane segment at Ala-131 to Ala-151 threads the bilayer. Over Ala-152–Ser-185 the chain is Extracellular. N-linked (GlcNAc...) asparagine glycosylation is present at Asn-159. A helical transmembrane segment spans residues Ile-186–Trp-206. Residues Leu-207–Tyr-210 are Cytoplasmic-facing.

The protein belongs to the Casparian strip membrane proteins (CASP) family. In terms of assembly, homodimer and heterodimers.

Its subcellular location is the cell membrane. The polypeptide is CASP-like protein 3A1 (Vitis vinifera (Grape)).